We begin with the raw amino-acid sequence, 287 residues long: Ret finger protein-like 4A (287 aa).

Residues 11-53 form an RING-type; degenerate zinc finger; it reads CYFCFRCLESPVYLNCGYICCLKCLDSLEKSPEGDGVLCPTCS. In terms of domain architecture, B30.2/SPRY spans 78–278; it reads EPQLNFILTM…LSICPVTNPG (201 aa).

As to quaternary structure, interacts with PSMB1, UBE2A and CCNB1. As to expression, expressed in the ovaries and oocytes (at protein level). Expression restricted to gonads. In testis, present at later stages of spermatogeneis and abundant in elongating spermatids.

It is found in the cytoplasm. Its subcellular location is the nucleus. This Mus musculus (Mouse) protein is Ret finger protein-like 4A (Rfpl4a).